We begin with the raw amino-acid sequence, 1884 residues long: MKPEIEQELSHTLLTELLAYQFASPVRWIETQDVFLKQHNTERVIEIGPSPTLAGMASRTIKAKYQSYDAALSLQRQVLCYSKDAKEIYYTPDPAEPPAAEEPKAETGKESAPAASAAAAAATQPAAAVAPPPQSAGPVESIPDEPVKASLLIHVLVAQKLKKPLDAVPMSKAIKDLVNGKSTVQNEILGDLGKEFGSTPEKPEETPLEELAEQFQDTFSGSLGKTSTSLIGRLMSSKMPGGFSITNARKYLESRFGLGPGRQDSVLLTALCNEPASRLGSEGDAKSFLDTMAQKYASHAGISLSSPSAGGASSGAGAAVVDSAALDALIAENKKLARQQLETLARYLQVDLTKGEKAFIKEKEATTVLQQELDLWEAEHGEFYAKGIKPVFSPLKSRTYDSYWNWARQDLLSMWFDILFGKLTSVDRETINQCIQIMNRANPTLIKFMQYHVELCPTYRGETYKLGKRLGEQLIENCKQILGQSPVYKDVSRITGPKTTVSAKGDIVYEEANKESVRKFEQYVFEMAQGGSMTKMKQSSIQEDLARVYKAISKQASRDSKLELQKVYDQLLKVVEGSTEIETEQTTQDALAIPTGSNTPTEEDELSTASDDDEIASLPDKTSIAQPVSSTIPNKTIPFLHIQSKSESGNWEYDRKLSSIYLDGLESAAINGLTFKDKYVLVTGAGAGSIGAEILQGLISGGAKVIVTTSRYSKKVTEYYQNMYARYGAAGSTLIVVPFNQGSKQDVDALVEYIYNDQKKGGLGWDLDVIIPFAAIPENGNGIDNIDSKSEFAHRIMLTNLLRLLGAVKARKTTDTRPAQCILPLSPNHGTFGFDGLYSESKISLETLFNRWYSEDWGTKLTICGAIIGWTRGTGLMSANNIIAEGIEKLGVRTFSQKEMAFNILGLLTPEIVNLCQEEPVMADLNGGLQFIDNLKEFTSKLRNDLTETADIRRAVSIESAIEQKVVNGDNVDSNYNKVTVRPRANMKFDFPTLKSYDEIKQIAPDLEGMLDLENVVVVTGFAEVGPWGNARTRWEMESKGEFSLEGAIEMAWIMGMIKYHNGNLKGKPYSGWIDAKTQTPVDDKDIKAKYEEEILEHSGIRLIEPELFNGYDPKKKQMIQEVVIQHDLEPFECSKETAEQYKHEHGDKCEISEIEESGEYSVRILKGATLFIPKALRFDRLVAGQIPTGWDARTYGIPEDTINQVDPITLYVLVATVEALLSAGITDPYEFYKYVHVSEVGNCSGSGMGGVSALRGMFKDRYADKPVQNDILQESFINTMSAWVNMLLLSASGPIKTPVGACATAVESVDIGIETILSGKAKVVMVGGYDDFQEEGSYEFANMNATSSAIDEFKHGRTPKEMSRPTTTTRNGFMEAQGSGIQVIMSADLALKMGVPIHAVLAMSATATDKIGRSVPAPGKGILTTAREHHGNLKYPSPLLNVKYRKRQLSKRLDQIKSWESSELNYLQEEAHLAKEEFGEEFSEAEFLRERTEEIYRESKRQVADAKKQWGNAFYKSDPRIAPLRGALATFNLTIDDIGVASFHGTSTVANDKNESATIDSMMKHLGRSEGNPVFGVFQKYLTGHPKGAAGAWMLNGAIQILESGIVPGNRNADNVDKVLEQYEYVLYPSRSIQTDGIKAVSVTSFGFGQKGAQAVVVHPDYLYAVLDRSTYEDYAKRVTARNKKTYRYMHNAITRNTMFVAKDKAPYSDELTMDVYLDPLARVSKTKNEFVFTKKSVQSDKSYVSNIANSTAKALSSLNKSSKGVGVDVELLSELNIDNETFLERNFTPEEIKYCQNSANPQASFTGTWSAKEATFKALGVSSQGGGASLKEIEIVRDGNGAPQVVLNDNAKAAAKAAGVKNVNVSISHDDFQATAVALSEF.

Residues 91–141 (TPDPAEPPAAEEPKAETGKESAPAASAAAAAATQPAAAVAPPPQSAGPVES) form a disordered region. Positions 111-129 (SAPAASAAAAAATQPAAAV) are enriched in low complexity. Positions 147 to 222 (VKASLLIHVL…EQFQDTFSGS (76 aa)) constitute a Carrier domain. Position 182 is an O-(pantetheine 4'-phosphoryl)serine (Ser182). The disordered stretch occupies residues 583–613 (TEQTTQDALAIPTGSNTPTEEDELSTASDDD). Polar residues predominate over residues 584-600 (EQTTQDALAIPTGSNTP). The segment covering 601 to 613 (TEEDELSTASDDD) has biased composition (acidic residues). The beta-ketoacyl reductase stretch occupies residues 677 to 873 (DKYVLVTGAG…CGAIIGWTRG (197 aa)). One can recognise a Ketosynthase family 3 (KS3) domain in the interval 1120-1660 (IQEVVIQHDL…QKGAQAVVVH (541 aa)). Active-site for beta-ketoacyl synthase activity residues include Cys1303, His1545, and His1586. Positions 1770, 1771, and 1772 each coordinate Mg(2+). Acetyl-CoA contacts are provided by residues 1770-1772 (DVE), Tyr1796, Ser1806, 1815-1825 (EATFKALGVSS), 1839-1842 (RDGN), and 1869-1871 (ISH). The Mg(2+) site is built by Ser1870 and His1871.

It belongs to the thiolase-like superfamily. Fungal fatty acid synthetase subunit alpha family. As to quaternary structure, fatty acid synthase is composed of alpha and beta subunits.

The enzyme catalyses acetyl-CoA + n malonyl-CoA + 2n NADPH + 4n H(+) = a long-chain-acyl-CoA + n CoA + n CO2 + 2n NADP(+).. It catalyses the reaction a fatty acyl-[ACP] + malonyl-[ACP] + H(+) = a 3-oxoacyl-[ACP] + holo-[ACP] + CO2. It carries out the reaction a (3R)-hydroxyacyl-[ACP] + NADP(+) = a 3-oxoacyl-[ACP] + NADPH + H(+). Fatty acid synthetase catalyzes the formation of long-chain fatty acids from acetyl-CoA, malonyl-CoA and NADPH. The alpha subunit contains domains for: acyl carrier protein, 3-oxoacyl-[acyl-carrier-protein] reductase, and 3-oxoacyl-[acyl-carrier-protein] synthase. This chain is Fatty acid synthase subunit alpha (FAS2), found in Candida parapsilosis (strain CDC 317 / ATCC MYA-4646) (Yeast).